Here is a 320-residue protein sequence, read N- to C-terminus: Ferrochelatase (320 aa).

Fe cation contacts are provided by His194 and Glu275.

This sequence belongs to the ferrochelatase family. Monomer.

Its subcellular location is the cytoplasm. The enzyme catalyses heme b + 2 H(+) = protoporphyrin IX + Fe(2+). It participates in porphyrin-containing compound metabolism; protoheme biosynthesis; protoheme from protoporphyrin-IX: step 1/1. Catalyzes the ferrous insertion into protoporphyrin IX. The chain is Ferrochelatase from Salmonella schwarzengrund (strain CVM19633).